The chain runs to 459 residues: Fe(3+)-Zn(2+) purple acid phosphatase (459 aa).

The N-terminal stretch at 1 to 22 is a signal peptide; the sequence is MGVVKGLLALALVLNVVVVSNG. Residue Gly-23 is modified to Blocked amino end (Gly). The N-linked (GlcNAc...) asparagine; partial glycan is linked to Asn-108. An N-linked (GlcNAc...) asparagine glycan is attached at Asn-136. Asp-162 lines the Fe cation pocket. Asn-170 carries an N-linked (GlcNAc...) asparagine glycan. Positions 191 and 194 each coordinate Fe cation. Asp-191 lines the Zn(2+) pocket. Asn-228 is a binding site for Zn(2+). Asn-238 carries N-linked (GlcNAc...) asparagine glycosylation. Position 313 (His-313) interacts with Zn(2+). His-323 acts as the Proton donor in catalysis. Residue His-350 coordinates Zn(2+). Fe cation is bound at residue His-352. Asn-423 is a glycosylation site (N-linked (GlcNAc...) asparagine).

Belongs to the metallophosphoesterase superfamily. Purple acid phosphatase family. As to quaternary structure, homodimer; disulfide-linked. It depends on Fe cation as a cofactor. Zn(2+) serves as cofactor.

It localises to the secreted. The enzyme catalyses a phosphate monoester + H2O = an alcohol + phosphate. With respect to regulation, inhibited by compounds CC24201, CC27209, and MO07123. Inhibited by the tetraoxoanions molybdate and phosphate. Not inhibited by EDTA or tartrate. The polypeptide is Fe(3+)-Zn(2+) purple acid phosphatase (Phaseolus vulgaris (Kidney bean)).